A 338-amino-acid polypeptide reads, in one-letter code: tRNA N6-adenosine threonylcarbamoyltransferase (338 aa).

Fe cation contacts are provided by His-111 and His-115. Residues 134–138 (LVSGG), Asp-167, Gly-180, and Asn-272 contribute to the substrate site. Residue Asp-300 coordinates Fe cation.

It belongs to the KAE1 / TsaD family. The cofactor is Fe(2+).

The protein localises to the cytoplasm. It catalyses the reaction L-threonylcarbamoyladenylate + adenosine(37) in tRNA = N(6)-L-threonylcarbamoyladenosine(37) in tRNA + AMP + H(+). Required for the formation of a threonylcarbamoyl group on adenosine at position 37 (t(6)A37) in tRNAs that read codons beginning with adenine. Is involved in the transfer of the threonylcarbamoyl moiety of threonylcarbamoyl-AMP (TC-AMP) to the N6 group of A37, together with TsaE and TsaB. TsaD likely plays a direct catalytic role in this reaction. The polypeptide is tRNA N6-adenosine threonylcarbamoyltransferase (Aliivibrio fischeri (strain MJ11) (Vibrio fischeri)).